The chain runs to 248 residues: 3-deoxy-manno-octulosonate cytidylyltransferase (248 aa).

This sequence belongs to the KdsB family.

It localises to the cytoplasm. The catalysed reaction is 3-deoxy-alpha-D-manno-oct-2-ulosonate + CTP = CMP-3-deoxy-beta-D-manno-octulosonate + diphosphate. It functions in the pathway nucleotide-sugar biosynthesis; CMP-3-deoxy-D-manno-octulosonate biosynthesis; CMP-3-deoxy-D-manno-octulosonate from 3-deoxy-D-manno-octulosonate and CTP: step 1/1. It participates in bacterial outer membrane biogenesis; lipopolysaccharide biosynthesis. In terms of biological role, activates KDO (a required 8-carbon sugar) for incorporation into bacterial lipopolysaccharide in Gram-negative bacteria. The polypeptide is 3-deoxy-manno-octulosonate cytidylyltransferase (Salmonella typhi).